A 341-amino-acid polypeptide reads, in one-letter code: Adenine deaminase (341 aa).

Zn(2+) contacts are provided by His24, His26, and His204. Glu207 serves as the catalytic Proton donor. Asp285 serves as a coordination point for Zn(2+). Asp286 contributes to the substrate binding site.

This sequence belongs to the metallo-dependent hydrolases superfamily. Adenosine and AMP deaminases family. Adenine deaminase type 2 subfamily. It depends on Zn(2+) as a cofactor.

The catalysed reaction is adenine + H2O + H(+) = hypoxanthine + NH4(+). Catalyzes the hydrolytic deamination of adenine to hypoxanthine. Plays an important role in the purine salvage pathway and in nitrogen catabolism. In Sphingopyxis alaskensis (strain DSM 13593 / LMG 18877 / RB2256) (Sphingomonas alaskensis), this protein is Adenine deaminase.